Consider the following 628-residue polypeptide: Glutamyl-tRNA(Gln) amidotransferase subunit E (628 aa).

The protein belongs to the GatB/GatE family. GatE subfamily. In terms of assembly, heterodimer of GatD and GatE.

It carries out the reaction L-glutamyl-tRNA(Gln) + L-glutamine + ATP + H2O = L-glutaminyl-tRNA(Gln) + L-glutamate + ADP + phosphate + H(+). Its function is as follows. Allows the formation of correctly charged Gln-tRNA(Gln) through the transamidation of misacylated Glu-tRNA(Gln) in organisms which lack glutaminyl-tRNA synthetase. The reaction takes place in the presence of glutamine and ATP through an activated gamma-phospho-Glu-tRNA(Gln). The GatDE system is specific for glutamate and does not act on aspartate. This chain is Glutamyl-tRNA(Gln) amidotransferase subunit E, found in Thermococcus gammatolerans (strain DSM 15229 / JCM 11827 / EJ3).